The primary structure comprises 198 residues: Ribonuclease HII (198 aa).

One can recognise an RNase H type-2 domain in the interval 2–192 (MYYCGIDEAG…IKKIIDNQKN (191 aa)). Asp-8, Glu-9, and Asp-101 together coordinate a divalent metal cation.

The protein belongs to the RNase HII family. Mn(2+) is required as a cofactor. The cofactor is Mg(2+).

The protein resides in the cytoplasm. The enzyme catalyses Endonucleolytic cleavage to 5'-phosphomonoester.. In terms of biological role, endonuclease that specifically degrades the RNA of RNA-DNA hybrids. In Natranaerobius thermophilus (strain ATCC BAA-1301 / DSM 18059 / JW/NM-WN-LF), this protein is Ribonuclease HII.